We begin with the raw amino-acid sequence, 117 residues long: UPF0127 protein PYRAB11210 (117 aa).

The protein belongs to the UPF0127 family.

The chain is UPF0127 protein PYRAB11210 from Pyrococcus abyssi (strain GE5 / Orsay).